Here is a 558-residue protein sequence, read N- to C-terminus: Dimethylaniline monooxygenase [N-oxide-forming] 4 (558 aa).

FAD-binding positions include 9–13 (GAGVS), glutamate 32, and 40–41 (LW). NADP(+) contacts are provided by residues 60-61 (TN) and 195-198 (TGGD). Residues 517–537 (AWGAPVLLASLLLICKSSLFL) form a helical membrane-spanning segment.

Belongs to the FMO family. FAD is required as a cofactor. As to expression, liver.

The protein localises to the microsome membrane. Its subcellular location is the endoplasmic reticulum membrane. The catalysed reaction is N,N-dimethylaniline + NADPH + O2 + H(+) = N,N-dimethylaniline N-oxide + NADP(+) + H2O. Functionally, this protein is involved in the oxidative metabolism of a variety of xenobiotics such as drugs and pesticides. This Homo sapiens (Human) protein is Dimethylaniline monooxygenase [N-oxide-forming] 4 (FMO4).